The following is a 373-amino-acid chain: Anhydro-N-acetylmuramic acid kinase (373 aa).

Residue 12 to 19 (GTSLDGVD) participates in ATP binding.

This sequence belongs to the anhydro-N-acetylmuramic acid kinase family.

It carries out the reaction 1,6-anhydro-N-acetyl-beta-muramate + ATP + H2O = N-acetyl-D-muramate 6-phosphate + ADP + H(+). It participates in amino-sugar metabolism; 1,6-anhydro-N-acetylmuramate degradation. It functions in the pathway cell wall biogenesis; peptidoglycan recycling. Its function is as follows. Catalyzes the specific phosphorylation of 1,6-anhydro-N-acetylmuramic acid (anhMurNAc) with the simultaneous cleavage of the 1,6-anhydro ring, generating MurNAc-6-P. Is required for the utilization of anhMurNAc either imported from the medium or derived from its own cell wall murein, and thus plays a role in cell wall recycling. This chain is Anhydro-N-acetylmuramic acid kinase, found in Erwinia tasmaniensis (strain DSM 17950 / CFBP 7177 / CIP 109463 / NCPPB 4357 / Et1/99).